The chain runs to 693 residues: UvrABC system protein B (693 aa).

Residues 35–188 (ERINNGEKDV…DQLLRQFVGI (154 aa)) enclose the Helicase ATP-binding domain. 48 to 55 (GATGTGKS) contacts ATP. Residues 101–124 (YYDYYQPEAYVPQTDTFIEKDSSV) carry the Beta-hairpin motif. The Helicase C-terminal domain maps to 438–600 (QIDDLLGEIR…VDPTPLRKRI (163 aa)). Positions 612 to 634 (ADTKSLLESAGKGRSRGKAPVPV) are disordered. The region spanning 648-683 (VDLIEQLTAQMHSAAGELQFELAARLRDEVGDLKKE) is the UVR domain.

This sequence belongs to the UvrB family. Forms a heterotetramer with UvrA during the search for lesions. Interacts with UvrC in an incision complex.

The protein localises to the cytoplasm. Its function is as follows. The UvrABC repair system catalyzes the recognition and processing of DNA lesions. A damage recognition complex composed of 2 UvrA and 2 UvrB subunits scans DNA for abnormalities. Upon binding of the UvrA(2)B(2) complex to a putative damaged site, the DNA wraps around one UvrB monomer. DNA wrap is dependent on ATP binding by UvrB and probably causes local melting of the DNA helix, facilitating insertion of UvrB beta-hairpin between the DNA strands. Then UvrB probes one DNA strand for the presence of a lesion. If a lesion is found the UvrA subunits dissociate and the UvrB-DNA preincision complex is formed. This complex is subsequently bound by UvrC and the second UvrB is released. If no lesion is found, the DNA wraps around the other UvrB subunit that will check the other stand for damage. This is UvrABC system protein B from Renibacterium salmoninarum (strain ATCC 33209 / DSM 20767 / JCM 11484 / NBRC 15589 / NCIMB 2235).